Here is a 274-residue protein sequence, read N- to C-terminus: AA9 family lytic polysaccharide monooxygenase A (274 aa).

Residues 1-22 (MHVPQFISTGALLALLARPAAA) form the signal peptide. His-23 is a Cu(2+) binding site. Cys-63 and Cys-194 form a disulfide bridge. (1,4-beta-D-glucosyl)n is bound by residues Gly-67, Asp-98, and Ser-100. His-101 serves as a coordination point for Cu(2+). Position 174 (His-174) interacts with O2. Asp-177 contributes to the (1,4-beta-D-glucosyl)n binding site. Tyr-191 serves as a coordination point for Cu(2+).

This sequence belongs to the polysaccharide monooxygenase AA9 family. It depends on Cu(2+) as a cofactor.

The protein resides in the secreted. The enzyme catalyses [(1-&gt;4)-beta-D-glucosyl]n+m + reduced acceptor + O2 = 4-dehydro-beta-D-glucosyl-[(1-&gt;4)-beta-D-glucosyl]n-1 + [(1-&gt;4)-beta-D-glucosyl]m + acceptor + H2O.. In terms of biological role, lytic polysaccharide monooxygenase (LPMO) that depolymerizes crystalline and amorphous polysaccharides via the oxidation of scissile alpha- or beta-(1-4)-glycosidic bonds, yielding C4 oxidation products. Catalysis by LPMOs requires the reduction of the active-site copper from Cu(II) to Cu(I) by a reducing agent and H(2)O(2) or O(2) as a cosubstrate. Cleaves a range of polysaccharides, including cellulose, xyloglucan, mixed-linkage glucan and glucomannan. The protein is AA9 family lytic polysaccharide monooxygenase A of Collariella virescens (Soil fungus).